The chain runs to 321 residues: Lipoyl synthase (321 aa).

7 residues coordinate [4Fe-4S] cluster: Cys60, Cys65, Cys71, Cys86, Cys90, Cys93, and Ser299. Residues 72 to 288 (WEKKHATFMI…ETIGRTKGFL (217 aa)) form the Radical SAM core domain.

It belongs to the radical SAM superfamily. Lipoyl synthase family. The cofactor is [4Fe-4S] cluster.

It is found in the cytoplasm. The catalysed reaction is [[Fe-S] cluster scaffold protein carrying a second [4Fe-4S](2+) cluster] + N(6)-octanoyl-L-lysyl-[protein] + 2 oxidized [2Fe-2S]-[ferredoxin] + 2 S-adenosyl-L-methionine + 4 H(+) = [[Fe-S] cluster scaffold protein] + N(6)-[(R)-dihydrolipoyl]-L-lysyl-[protein] + 4 Fe(3+) + 2 hydrogen sulfide + 2 5'-deoxyadenosine + 2 L-methionine + 2 reduced [2Fe-2S]-[ferredoxin]. It participates in protein modification; protein lipoylation via endogenous pathway; protein N(6)-(lipoyl)lysine from octanoyl-[acyl-carrier-protein]: step 2/2. Its function is as follows. Catalyzes the radical-mediated insertion of two sulfur atoms into the C-6 and C-8 positions of the octanoyl moiety bound to the lipoyl domains of lipoate-dependent enzymes, thereby converting the octanoylated domains into lipoylated derivatives. The chain is Lipoyl synthase from Mesorhizobium japonicum (strain LMG 29417 / CECT 9101 / MAFF 303099) (Mesorhizobium loti (strain MAFF 303099)).